Here is a 505-residue protein sequence, read N- to C-terminus: Trans-cinnamate 4-monooxygenase C4H2 (505 aa).

Short sequence motifs (nuclear localization signal) lie at residues 161-168 (VKKMKESN) and 247-254 (EKRLKLFK). Cysteine 447 contributes to the heme binding site.

This sequence belongs to the cytochrome P450 family. Heme is required as a cofactor.

The protein resides in the nucleus. The enzyme catalyses (E)-cinnamate + reduced [NADPH--hemoprotein reductase] + O2 = (E)-4-coumarate + oxidized [NADPH--hemoprotein reductase] + H2O + H(+). The protein operates within phenylpropanoid metabolism; trans-4-coumarate biosynthesis; trans-4-coumarate from trans-cinnamate: step 1/1. Component of the floral volatile benzenoid/phenylpropanoid (FVBP) biosynthetic pathway that controls carbon flux to pigments essential for pollination or UV protection, to numerous pytoalexins synthesized by plants when challenged by pathogens, and to lignins. The protein is Trans-cinnamate 4-monooxygenase C4H2 of Petunia hybrida (Petunia).